Consider the following 143-residue polypeptide: MPDPGNRRLLAFDFGTRRIGVASGQEMLGTGQPLAMLPARDGIPDWQQIEALLADWQPDIVLVGLPLNMDDTENEMCARARKFGKRLHGRYHVTVEMVDERLTSYEAKGEVMAGGGSRDFGRHGVDDRAAVLILETWCREQAG.

The protein belongs to the YqgF nuclease family.

The protein resides in the cytoplasm. In terms of biological role, could be a nuclease involved in processing of the 5'-end of pre-16S rRNA. This is Putative pre-16S rRNA nuclease from Marinobacter nauticus (strain ATCC 700491 / DSM 11845 / VT8) (Marinobacter aquaeolei).